The chain runs to 395 residues: Crh-like protein 5 (395 aa).

An N-terminal signal peptide occupies residues 1 to 19 (MYFKYTAAALAAVLPLCSA). Cys25 and Cys32 form a disulfide bridge. The 186-residue stretch at 45–230 (ADFTSASALD…WAGGLTDYSA (186 aa)) folds into the GH16 domain. Residue Glu119 is the Nucleophile of the active site. Glu123 serves as the catalytic Proton donor. Chitin contacts are provided by Glu123, Arg203, Trp207, and Thr218. A disordered region spans residues 271–374 (ISSSSSVTSS…PELSQGAAGS (104 aa)). Composition is skewed to low complexity over residues 272–338 (SSSS…SNTG) and 348–364 (GSSS…ASAT). Residue Asn319 is glycosylated (N-linked (GlcNAc...) asparagine). Gly370 carries GPI-like-anchor amidated glycine lipidation. Positions 371 to 395 (AAGSIKGSVTACALVFGAVAAVLAF) are cleaved as a propeptide — removed in mature form.

This sequence belongs to the glycosyl hydrolase 16 family. CRH1 subfamily. In terms of processing, the GPI-like anchor contains a phosphoceramide lipid group. The anchor position has not been determined.

The protein localises to the cell membrane. Its subcellular location is the secreted. It is found in the cell wall. It catalyses the reaction Random endo-hydrolysis of N-acetyl-beta-D-glucosaminide (1-&gt;4)-beta-linkages in chitin and chitodextrins.. In terms of biological role, dual chitinase/transglycosylase that plays a role in cell wall architecture. Chitinase and transglycosylase activities are coupled. Required for the polysaccharide cross-linking at the septa and the cell wall. More specifically, transfers chitin to 1,6-beta-glucan in the cell wall. Chr5 shows acceptor substrate promiscuity and is also able to cross-link chitin to chitin. The sequence is that of Crh-like protein 5 from Aspergillus fumigatus (strain ATCC MYA-4609 / CBS 101355 / FGSC A1100 / Af293) (Neosartorya fumigata).